The sequence spans 238 residues: ATP-dependent dethiobiotin synthetase BioD (238 aa).

13 to 18 (EIGKTV) contacts ATP. T17 is a Mg(2+) binding site. K38 is an active-site residue. Position 42 (T42) interacts with substrate. Mg(2+)-binding residues include R59 and E111. ATP is bound by residues 111 to 114 (EGAG), 175 to 176 (NQ), and 204 to 206 (PLL).

The protein belongs to the dethiobiotin synthetase family. Homodimer. Mg(2+) serves as cofactor.

The protein resides in the cytoplasm. It carries out the reaction (7R,8S)-7,8-diammoniononanoate + CO2 + ATP = (4R,5S)-dethiobiotin + ADP + phosphate + 3 H(+). Its pathway is cofactor biosynthesis; biotin biosynthesis; biotin from 7,8-diaminononanoate: step 1/2. Functionally, catalyzes a mechanistically unusual reaction, the ATP-dependent insertion of CO2 between the N7 and N8 nitrogen atoms of 7,8-diaminopelargonic acid (DAPA, also called 7,8-diammoniononanoate) to form a ureido ring. This chain is ATP-dependent dethiobiotin synthetase BioD, found in Geobacillus kaustophilus (strain HTA426).